The chain runs to 242 residues: 1-(5-phosphoribosyl)-5-[(5-phosphoribosylamino)methylideneamino] imidazole-4-carboxamide isomerase (242 aa).

Residue Asp-8 is the Proton acceptor of the active site. Residue Asp-129 is the Proton donor of the active site.

It belongs to the HisA/HisF family.

The protein resides in the cytoplasm. It catalyses the reaction 1-(5-phospho-beta-D-ribosyl)-5-[(5-phospho-beta-D-ribosylamino)methylideneamino]imidazole-4-carboxamide = 5-[(5-phospho-1-deoxy-D-ribulos-1-ylimino)methylamino]-1-(5-phospho-beta-D-ribosyl)imidazole-4-carboxamide. The protein operates within amino-acid biosynthesis; L-histidine biosynthesis; L-histidine from 5-phospho-alpha-D-ribose 1-diphosphate: step 4/9. The polypeptide is 1-(5-phosphoribosyl)-5-[(5-phosphoribosylamino)methylideneamino] imidazole-4-carboxamide isomerase (Syntrophus aciditrophicus (strain SB)).